The following is a 484-amino-acid chain: Threonine synthase-like 2 (484 aa).

N6-(pyridoxal phosphate)lysine is present on Lys-113.

Belongs to the threonine synthase family. Requires pyridoxal 5'-phosphate as cofactor.

The protein localises to the secreted. Acts as a catabolic phospho-lyase on both gamma- and beta-phosphorylated substrates. Degrades O-phospho-threonine (PThr) to alpha-ketobutyrate, ammonia and phosphate. In terms of biological role, potent inducer of osteoblastic production of IL6. May act to exacerbate inflammation and/or bone turnover under inflammatory conditions. In Homo sapiens (Human), this protein is Threonine synthase-like 2 (THNSL2).